A 393-amino-acid polypeptide reads, in one-letter code: Acetate kinase (393 aa).

Asparagine 6 serves as a coordination point for Mg(2+). Lysine 13 provides a ligand contact to ATP. A substrate-binding site is contributed by arginine 87. The Proton donor/acceptor role is filled by aspartate 143. ATP is bound by residues 203–207 (HLGNG), 278–280 (DMR), and 326–330 (GIGEN). Residue glutamate 380 coordinates Mg(2+).

Belongs to the acetokinase family. In terms of assembly, homodimer. Mg(2+) serves as cofactor. Mn(2+) is required as a cofactor.

It is found in the cytoplasm. It catalyses the reaction acetate + ATP = acetyl phosphate + ADP. The protein operates within metabolic intermediate biosynthesis; acetyl-CoA biosynthesis; acetyl-CoA from acetate: step 1/2. In terms of biological role, catalyzes the formation of acetyl phosphate from acetate and ATP. Can also catalyze the reverse reaction. The protein is Acetate kinase of Mycoplasma capricolum subsp. capricolum (strain California kid / ATCC 27343 / NCTC 10154).